The following is a 361-amino-acid chain: MTRAFNFSAGPATLPESVLRQAQAEMLDWHGSGASIVEMSHRGAEFMSVAAEAEADLRRLLDIPDDYAVLFLSGGATTQQALIPLNFAAPGQRADYVVSGHWGKTAVKQAGVYVDVNIAASSEANGYRELPARADWQLSRDAAYVHITANETIHGVEFRDVPDTGNVPLIADFSSSIASEPLDVRRYGVIYAGAQKNLGPVGVAVMIIRRDLLERSGQPRADIFDYRSHVARDSMLNTPPTWNWYLAGLVFKWMLAEGGVTEFAKRNAAKAALVYGAIDGSGGFYRNEVAYAARSRMNIPFFLPDAELDARFVAEAKAAGLLALKGHKVVGGIRASLYNAMPLAGAEALVAFMADFQQRHG.

Arg42 provides a ligand contact to L-glutamate. Residues Ala76 to Thr77, Trp102, Thr152, Asp172, and Gln195 each bind pyridoxal 5'-phosphate. Lys196 carries the post-translational modification N6-(pyridoxal phosphate)lysine. Asn237–Thr238 lines the pyridoxal 5'-phosphate pocket.

It belongs to the class-V pyridoxal-phosphate-dependent aminotransferase family. SerC subfamily. In terms of assembly, homodimer. Pyridoxal 5'-phosphate is required as a cofactor.

It localises to the cytoplasm. It carries out the reaction O-phospho-L-serine + 2-oxoglutarate = 3-phosphooxypyruvate + L-glutamate. The enzyme catalyses 4-(phosphooxy)-L-threonine + 2-oxoglutarate = (R)-3-hydroxy-2-oxo-4-phosphooxybutanoate + L-glutamate. It functions in the pathway amino-acid biosynthesis; L-serine biosynthesis; L-serine from 3-phospho-D-glycerate: step 2/3. It participates in cofactor biosynthesis; pyridoxine 5'-phosphate biosynthesis; pyridoxine 5'-phosphate from D-erythrose 4-phosphate: step 3/5. Catalyzes the reversible conversion of 3-phosphohydroxypyruvate to phosphoserine and of 3-hydroxy-2-oxo-4-phosphonooxybutanoate to phosphohydroxythreonine. The sequence is that of Phosphoserine aminotransferase from Stenotrophomonas maltophilia (strain K279a).